The chain runs to 159 residues: RNA pyrophosphohydrolase (159 aa).

Residues 6–149 (GFRPNVGIIL…KREVYRRALK (144 aa)) form the Nudix hydrolase domain. Residues 38–59 (GGINARETPEEALFRELNEEVG) carry the Nudix box motif.

This sequence belongs to the Nudix hydrolase family. RppH subfamily. A divalent metal cation serves as cofactor.

Accelerates the degradation of transcripts by removing pyrophosphate from the 5'-end of triphosphorylated RNA, leading to a more labile monophosphorylated state that can stimulate subsequent ribonuclease cleavage. The protein is RNA pyrophosphohydrolase of Stutzerimonas stutzeri (strain A1501) (Pseudomonas stutzeri).